A 376-amino-acid polypeptide reads, in one-letter code: Cysteine proteinase 2 (376 aa).

An N-terminal signal peptide occupies residues Met1–Ala18. A propeptide spans Asn19–Thr122 (activation peptide). 3 cysteine pairs are disulfide-bonded: Cys144–Cys187, Cys178–Cys221, and Cys279–Cys365. Residue Cys147 is part of the active site. Active-site residues include His286 and Asn343.

The protein belongs to the peptidase C1 family.

The protein resides in the lysosome. Cysteine proteinases 1 and 2 are believed to participate in the breakdown of protein during differentiation of Dictyostelium as a response to starvation. This Dictyostelium discoideum (Social amoeba) protein is Cysteine proteinase 2 (cprB).